The sequence spans 258 residues: Small ribosomal subunit protein mS35 (258 aa).

The N-terminal 39 residues, 1-39, are a transit peptide targeting the mitochondrion; sequence MAFNPLLSLLKADAIFLGQLSKSSFCATSRAFSVFYFTR.

Belongs to the mitochondrion-specific ribosomal protein mS35 family. In terms of assembly, component of the mitochondrial small ribosomal subunit (mt-SSU). Mature yeast 74S mitochondrial ribosomes consist of a small (37S) and a large (54S) subunit. The 37S small subunit contains a 15S ribosomal RNA (15S mt-rRNA) and at least 32 different proteins. The 54S large subunit contains a 21S rRNA (21S mt-rRNA) and at least 45 different proteins.

Its subcellular location is the mitochondrion. Functionally, component of the mitochondrial ribosome (mitoribosome), a dedicated translation machinery responsible for the synthesis of mitochondrial genome-encoded proteins, including at least some of the essential transmembrane subunits of the mitochondrial respiratory chain. The mitoribosomes are attached to the mitochondrial inner membrane and translation products are cotranslationally integrated into the membrane. The chain is Small ribosomal subunit protein mS35 (rsm24) from Schizosaccharomyces pombe (strain 972 / ATCC 24843) (Fission yeast).